We begin with the raw amino-acid sequence, 822 residues long: Ribonucleoside-diphosphate reductase large subunit (822 aa).

Residues Thr-249, 264–265, Gly-295, 470–474, and 651–655 each bind substrate; these read SC, NLCTE, and PTAAS. A disulfide bridge connects residues Cys-265 and Cys-487. The Proton acceptor role is filled by Asn-470. Cys-472 serves as the catalytic Cysteine radical intermediate. Residue Glu-474 is the Proton acceptor of the active site.

This sequence belongs to the ribonucleoside diphosphate reductase large chain family. As to quaternary structure, heterotetramer composed of a homodimer of the large subunit (R1) and a homodimer of the small subunit (R2). Larger multisubunit protein complex are also active, composed of (R1)n(R2)n.

The catalysed reaction is a 2'-deoxyribonucleoside 5'-diphosphate + [thioredoxin]-disulfide + H2O = a ribonucleoside 5'-diphosphate + [thioredoxin]-dithiol. Ribonucleoside-diphosphate reductase holoenzyme provides the precursors necessary for viral DNA synthesis. Allows virus growth in non-dividing cells, as well as reactivation from latency in infected hosts. Catalyzes the biosynthesis of deoxyribonucleotides from the corresponding ribonucleotides. The polypeptide is Ribonucleoside-diphosphate reductase large subunit (Gallus gallus (Chicken)).